Consider the following 373-residue polypeptide: 4-hydroxy-3-methylbut-2-en-1-yl diphosphate synthase (flavodoxin) (373 aa).

[4Fe-4S] cluster contacts are provided by Cys-270, Cys-273, Cys-305, and Glu-312.

It belongs to the IspG family. The cofactor is [4Fe-4S] cluster.

It catalyses the reaction (2E)-4-hydroxy-3-methylbut-2-enyl diphosphate + oxidized [flavodoxin] + H2O + 2 H(+) = 2-C-methyl-D-erythritol 2,4-cyclic diphosphate + reduced [flavodoxin]. It functions in the pathway isoprenoid biosynthesis; isopentenyl diphosphate biosynthesis via DXP pathway; isopentenyl diphosphate from 1-deoxy-D-xylulose 5-phosphate: step 5/6. Its function is as follows. Converts 2C-methyl-D-erythritol 2,4-cyclodiphosphate (ME-2,4cPP) into 1-hydroxy-2-methyl-2-(E)-butenyl 4-diphosphate. This Proteus mirabilis (strain HI4320) protein is 4-hydroxy-3-methylbut-2-en-1-yl diphosphate synthase (flavodoxin).